The sequence spans 244 residues: Krueppel-like factor 9 (244 aa).

2 disordered regions span residues Val24–Gly51 and Ser80–Arg142. A compositionally biased stretch (basic and acidic residues) spans Asp32 to Gly51. Ser122 carries the phosphoserine modification. 3 consecutive C2H2-type zinc fingers follow at residues His143–His167, Phe173–His197, and Phe203–His225.

Belongs to the Sp1 C2H2-type zinc-finger protein family. As to quaternary structure, interacts with ZZEF1.

It is found in the nucleus. Its function is as follows. Transcription factor that binds to GC box promoter elements. Selectively activates mRNA synthesis from genes containing tandem repeats of GC boxes but represses genes with a single GC box. Acts as an epidermal circadian transcription factor regulating keratinocyte proliferation. This is Krueppel-like factor 9 (KLF9) from Sus scrofa (Pig).